A 394-amino-acid polypeptide reads, in one-letter code: Elongation factor Tu (394 aa).

A tr-type G domain is found at Lys10–Glu204. Residues Gly19–Thr26 form a G1 region. Gly19 to Thr26 contacts GTP. Mg(2+) is bound at residue Thr26. The G2 stretch occupies residues Gly60–Asn64. The segment at Asp81–Gly84 is G3. Residues Asp81 to His85 and Asn136 to Asp139 contribute to the GTP site. The G4 stretch occupies residues Asn136 to Asp139. The G5 stretch occupies residues Ser174–Leu176.

The protein belongs to the TRAFAC class translation factor GTPase superfamily. Classic translation factor GTPase family. EF-Tu/EF-1A subfamily. In terms of assembly, monomer.

Its subcellular location is the cytoplasm. The catalysed reaction is GTP + H2O = GDP + phosphate + H(+). In terms of biological role, GTP hydrolase that promotes the GTP-dependent binding of aminoacyl-tRNA to the A-site of ribosomes during protein biosynthesis. The sequence is that of Elongation factor Tu from Klebsiella pneumoniae subsp. pneumoniae (strain ATCC 700721 / MGH 78578).